We begin with the raw amino-acid sequence, 407 residues long: uncharacterized protein (407 aa).

2 disordered regions span residues 1–62 and 350–379; these read MTGR…NGDP and SVTP…KPSS. Basic and acidic residues predominate over residues 17 to 30; the sequence is PVEKMPRFQREHGA.

This is an uncharacterized protein from Ictaluridae (bullhead catfishes).